Reading from the N-terminus, the 441-residue chain is MSSEKLFRIQCGYQNYDWGKIGSSSAVAQFVHNSDPSITIDETKPYAELWMGTHPSVPSKAIDLNNQTLRDLVTAKPQEYLGESIITKFGSSKELPFLFKVLSIEKVLSIQAHPDKKLGAQLHAADPKNYPDDNHKPEMAIAVTDFEGFCGFKPLDQLAKTLATVPELNEIIGQELVDEFISGIKLPAEVGSQDDVNNRKLLQKVFGKLMNTDDDVIKQQTAKLLERTDREPQVFKDIDSRLPELIQRLNKQFPNDIGLFCGCLLLNHVGLNKGEAMFLQAKDPHAYISGDIIECMAASDNVVRAGFTPKFKDVKNLVEMLTYSYESVEKQKMPLQEFPRSKGDAVKSVLYDPPIAEFSVLQTIFDKSKGGKQVIEGLNGPSIVIATNGKGTIQITGDDSTKQKIDTGYVFFVAPGSSIELTADSANQDQDFTTYRAFVEA.

Zn(2+) contacts are provided by Gln-111, His-113, Glu-138, and His-285. Residue Arg-304 is part of the active site.

It belongs to the mannose-6-phosphate isomerase type 1 family. As to quaternary structure, monomer. Zn(2+) serves as cofactor.

Its subcellular location is the cytoplasm. The catalysed reaction is D-mannose 6-phosphate = D-fructose 6-phosphate. Its pathway is nucleotide-sugar biosynthesis; GDP-alpha-D-mannose biosynthesis; alpha-D-mannose 1-phosphate from D-fructose 6-phosphate: step 1/2. Involved in the synthesis of the GDP-mannose and dolichol-phosphate-mannose required for a number of critical mannosyl transfer reactions. This is Mannose-6-phosphate isomerase (PMI1) from Candida albicans (strain SC5314 / ATCC MYA-2876) (Yeast).